A 241-amino-acid polypeptide reads, in one-letter code: MLRVLIVDDEMLARDELAYLLKRTNDEMEINEAENIESAFDQMMDQKPDLLFLDVDLSGENGFDIAKRLKKMKHPPAIVFATAYDQYALKAFEVDALDYLTKPFDEERIQQTLKKYKKVNRDIVETEQNSHAGQHKLALSVGESIVIVDTKDIIYAGTEDGHVNVKTFDHSYTVSDTLVVIEKKLPDSDFIRVHRSFVVNTEYIKEIQPWFNSTYNLIMKDGSKIPVSRTYAKELKKLLHI.

The Response regulatory domain occupies 3-117 (RVLIVDDEML…RIQQTLKKYK (115 aa)). A 4-aspartylphosphate modification is found at aspartate 54. One can recognise an HTH LytTR-type domain in the interval 137 to 241 (LALSVGESIV…AKELKKLLHI (105 aa)).

Phosphorylated by LytS.

Its subcellular location is the cytoplasm. Its function is as follows. Member of the two-component regulatory system LytS/LytT that probably regulates genes involved in cell wall metabolism. In Bacillus subtilis (strain 168), this protein is Sensory transduction protein LytT (lytT).